We begin with the raw amino-acid sequence, 248 residues long: MAGHSKWANIKHRKERQDAKKGKIFTKWIRELTVAARQGGGDPGSNPRLRLALDKALGANMTRDTIDRAVARGVGASDGDDVEELGYEGYGPGGVAIMVETMTDNRNRTAAAVRHAFTKCGGNLGTDGSVAYLFDRKGQISFAAGVDEDSLIEAAMEADADDVVTNEDGSIDVFTSFSGFYAVRNALEAAGFKAADAEIVMLPTTSAVLDLETAEKVLKLIDMLEDLDDVQNVYSNAEIPDEVMEQLG.

The protein belongs to the TACO1 family.

The protein localises to the cytoplasm. This chain is Probable transcriptional regulatory protein Psyr_1407, found in Pseudomonas syringae pv. syringae (strain B728a).